The sequence spans 360 residues: Peptide chain release factor 1 (360 aa).

Q235 bears the N5-methylglutamine mark. The tract at residues 285-304 (KRQQEEASTRRNLLGSGDRS) is disordered.

Belongs to the prokaryotic/mitochondrial release factor family. Methylated by PrmC. Methylation increases the termination efficiency of RF1.

The protein localises to the cytoplasm. Functionally, peptide chain release factor 1 directs the termination of translation in response to the peptide chain termination codons UAG and UAA. The protein is Peptide chain release factor 1 of Edwardsiella ictaluri (strain 93-146).